The sequence spans 182 residues: NADH-quinone oxidoreductase subunit I (182 aa).

2 consecutive 4Fe-4S ferredoxin-type domains span residues 52 to 82 (LTRD…LQKA) and 92 to 121 (EFFR…LTPD). Cys62, Cys65, Cys68, Cys72, Cys101, Cys104, Cys107, and Cys111 together coordinate [4Fe-4S] cluster.

It belongs to the complex I 23 kDa subunit family. As to quaternary structure, NDH-1 is composed of 13 different subunits. Subunits NuoA, H, J, K, L, M, N constitute the membrane sector of the complex. Requires [4Fe-4S] cluster as cofactor.

The protein localises to the cell inner membrane. The enzyme catalyses a quinone + NADH + 5 H(+)(in) = a quinol + NAD(+) + 4 H(+)(out). Functionally, NDH-1 shuttles electrons from NADH, via FMN and iron-sulfur (Fe-S) centers, to quinones in the respiratory chain. The immediate electron acceptor for the enzyme in this species is believed to be ubiquinone. Couples the redox reaction to proton translocation (for every two electrons transferred, four hydrogen ions are translocated across the cytoplasmic membrane), and thus conserves the redox energy in a proton gradient. The protein is NADH-quinone oxidoreductase subunit I of Pseudomonas putida (strain ATCC 47054 / DSM 6125 / CFBP 8728 / NCIMB 11950 / KT2440).